A 396-amino-acid polypeptide reads, in one-letter code: Stearoyl-[acyl-carrier-protein] 9-desaturase 2, chloroplastic (396 aa).

The transit peptide at 1–32 (MALRPNDVTLRLTPPLAAAARRNRRAAAGGVR) directs the protein to the chloroplast. Fe cation contacts are provided by Glu-138, Glu-176, His-179, Glu-229, Glu-262, and His-265.

Belongs to the fatty acid desaturase type 2 family. Homodimer. Requires Fe(2+) as cofactor.

The protein localises to the plastid. It localises to the chloroplast. The catalysed reaction is octadecanoyl-[ACP] + 2 reduced [2Fe-2S]-[ferredoxin] + O2 + 2 H(+) = (9Z)-octadecenoyl-[ACP] + 2 oxidized [2Fe-2S]-[ferredoxin] + 2 H2O. Its pathway is lipid metabolism; fatty acid metabolism. Converts stearoyl-ACP to oleoyl-ACP by introduction of a cis double bond between carbons 9 and 10 of the acyl chain. Required for the repression of the salicylic acid (SA) signaling pathway. This Oryza sativa subsp. indica (Rice) protein is Stearoyl-[acyl-carrier-protein] 9-desaturase 2, chloroplastic (SSI2).